An 863-amino-acid chain; its full sequence is Glycerol-3-phosphate acyltransferase (863 aa).

Residues 1–29 (MPKKNSPLLPKETTTTQSSVDTSGSSNLT) form a disordered region. The span at 12–29 (ETTTTQSSVDTSGSSNLT) shows a compositional bias: polar residues. The HXXXXD motif signature appears at 343–348 (SHRSHM).

Belongs to the GPAT/DAPAT family.

The protein resides in the cell inner membrane. It carries out the reaction sn-glycerol 3-phosphate + an acyl-CoA = a 1-acyl-sn-glycero-3-phosphate + CoA. It functions in the pathway phospholipid metabolism; CDP-diacylglycerol biosynthesis; CDP-diacylglycerol from sn-glycerol 3-phosphate: step 1/3. This chain is Glycerol-3-phosphate acyltransferase, found in Xylella fastidiosa (strain M23).